Reading from the N-terminus, the 391-residue chain is GTPase Obg (391 aa).

In terms of domain architecture, Obg spans methionine 1–leucine 159. In terms of domain architecture, OBG-type G spans alanine 160–lysine 333. GTP is bound by residues glycine 166–serine 173, phenylalanine 191–valine 195, aspartate 213–glycine 216, asparagine 283–aspartate 286, and serine 314–isoleucine 316. Residues serine 173 and threonine 193 each coordinate Mg(2+).

The protein belongs to the TRAFAC class OBG-HflX-like GTPase superfamily. OBG GTPase family. In terms of assembly, monomer. The cofactor is Mg(2+).

Its subcellular location is the cytoplasm. An essential GTPase which binds GTP, GDP and possibly (p)ppGpp with moderate affinity, with high nucleotide exchange rates and a fairly low GTP hydrolysis rate. Plays a role in control of the cell cycle, stress response, ribosome biogenesis and in those bacteria that undergo differentiation, in morphogenesis control. In Photorhabdus laumondii subsp. laumondii (strain DSM 15139 / CIP 105565 / TT01) (Photorhabdus luminescens subsp. laumondii), this protein is GTPase Obg.